Consider the following 317-residue polypeptide: MWLYLAVLLGLYYLLRWFRERQVVSHLQDKFVFITGCDSGFGNQLARQLDLRGLRVLAGCLTEQGAEQLRNQTSDRLQTVILDVTKTESIAAATEWVKECVGDRGLWGLVNNAGIFHSHGYAEWIKIETYRDTLRVNLIGVIEVTLSMLPLVRKAQGRIVNVSSILGRIAFFGAVYSCSKYGVEAFSDILRRELQHFGVKVSMVEPGYFRTAMTDWQKFSEIMKQIWKETPAHIKETYGQKFFDAYHDLMKQGLLSCSTNLNLVTDCMEHALTSVHPRTRYSAGWDAQFFFVPLSYLPTSLADYILTRSWPKPAQAV.

A signal peptide spans 1-17 (MWLYLAVLLGLYYLLRW). 33–57 (FITGCDSGFGNQLARQLDLRGLRVL) contacts NAD(+). N-linked (GlcNAc...) asparagine glycans are attached at residues Asn71 and Asn161. Ser164 contacts substrate. Catalysis depends on Tyr176, which acts as the Proton acceptor.

The protein belongs to the short-chain dehydrogenases/reductases (SDR) family.

It localises to the microsome membrane. Its subcellular location is the endoplasmic reticulum membrane. It carries out the reaction all-trans-retinol--[retinol-binding protein] + NAD(+) = all-trans-retinal--[retinol-binding protein] + NADH + H(+). It catalyses the reaction all-trans-retinol + NAD(+) = all-trans-retinal + NADH + H(+). The catalysed reaction is androsterone + NAD(+) = 5alpha-androstan-3,17-dione + NADH + H(+). The enzyme catalyses testosterone + NAD(+) = androst-4-ene-3,17-dione + NADH + H(+). It carries out the reaction 5alpha-androstane-3alpha,17beta-diol + NAD(+) = 17beta-hydroxy-5alpha-androstan-3-one + NADH + H(+). It catalyses the reaction 17beta-estradiol + NAD(+) = estrone + NADH + H(+). The catalysed reaction is 17beta-estradiol + NADP(+) = estrone + NADPH + H(+). The enzyme catalyses 3alpha-hydroxy-5alpha-pregnan-20-one + NAD(+) = 5alpha-pregnane-3,20-dione + NADH + H(+). It carries out the reaction 5alpha-androstane-3beta,17beta-diol + NAD(+) = 17beta-hydroxy-5alpha-androstan-3-one + NADH + H(+). It catalyses the reaction 3beta-hydroxy-5alpha-androstan-17-one + NAD(+) = 5alpha-androstan-3,17-dione + NADH + H(+). NAD-dependent oxidoreductase with broad substrate specificity that shows both oxidative and reductive activity (in vitro). Has 17-beta-hydroxysteroid dehydrogenase activity towards various steroids (in vitro). Converts 5-alpha-androstan-3-alpha,17-beta-diol to androsterone and estradiol to estrone (in vitro). Has 3-alpha-hydroxysteroid dehydrogenase activity towards androsterone (in vitro). Has retinol dehydrogenase activity towards all-trans-retinol (in vitro). Can convert androsterone to epi-androsterone. Androsterone is first oxidized to 5-alpha-androstane-3,17-dione and then reduced to epi-andosterone. Can act on both C-19 and C-21 3-alpha-hydroxysteroids. In Bos taurus (Bovine), this protein is 17-beta-hydroxysteroid dehydrogenase type 6 (HSD17B6).